Here is a 583-residue protein sequence, read N- to C-terminus: Aspartate--tRNA ligase (583 aa).

Glu174 lines the L-aspartate pocket. The aspartate stretch occupies residues 198–201 (QITK). Arg220 serves as a coordination point for L-aspartate. ATP contacts are provided by residues 220–222 (RDE) and Gln229. L-aspartate is bound at residue His443. An ATP-binding site is contributed by Glu477. Arg484 is a binding site for L-aspartate. An ATP-binding site is contributed by 529–532 (GLDR).

The protein belongs to the class-II aminoacyl-tRNA synthetase family. Type 1 subfamily. Homodimer.

Its subcellular location is the cytoplasm. The enzyme catalyses tRNA(Asp) + L-aspartate + ATP = L-aspartyl-tRNA(Asp) + AMP + diphosphate. In terms of biological role, catalyzes the attachment of L-aspartate to tRNA(Asp) in a two-step reaction: L-aspartate is first activated by ATP to form Asp-AMP and then transferred to the acceptor end of tRNA(Asp). The polypeptide is Aspartate--tRNA ligase (Streptococcus agalactiae serotype Ia (strain ATCC 27591 / A909 / CDC SS700)).